The following is a 373-amino-acid chain: Alanine dehydrogenase (373 aa).

Substrate is bound by residues Arg15 and Lys74. His95 (proton donor/acceptor) is an active-site residue. NAD(+) is bound by residues Ser133, 177–178 (QA), Asp197, Ser219, 238–239 (VL), 266–269 (IAID), and 298–301 (VANM). Asp269 serves as the catalytic Proton donor/acceptor.

The protein belongs to the AlaDH/PNT family. In terms of assembly, homohexamer. Trimer of dimer.

It carries out the reaction L-alanine + NAD(+) + H2O = pyruvate + NH4(+) + NADH + H(+). Its pathway is amino-acid degradation; L-alanine degradation via dehydrogenase pathway; NH(3) and pyruvate from L-alanine: step 1/1. Its function is as follows. Catalyzes the reversible reductive amination of pyruvate to L-alanine. May play a role in cell wall synthesis as L-alanine is an important constituent of the peptidoglycan layer. The polypeptide is Alanine dehydrogenase (ald) (Staphylococcus haemolyticus (strain JCSC1435)).